A 659-amino-acid chain; its full sequence is Protein NEDD1 (659 aa).

8 WD repeats span residues 1–31 (MQENLRFASSGDDVKIWDASSMTLVDKFNPH), 32–71 (TAPHAISSVCWSSNNNFLVTASSSGDKIVVSSCKCKPVPL), 75–114 (GEGQKQTCVSLNSTSMYLVSGGLNNTVNIWDLKSKRVHRS), 117–156 (DHKDEVTCVTYNWNDCYIASGSLSGEIILHSVTTNLSSTP), 160–200 (GSNQ…PYHN), 204–244 (THKA…LVKT), 246–285 (VADAPLTAVDFMPDGATLAIGSSRGKIYQYDLRMLKSPIK), and 289–332 (AHKT…SAGG). Thr-382 bears the Phosphothreonine; by PLK1 mark. Residues 383–433 (LSKEAESGKNQDFSNFDDSGKSSLGDMFSPVRDDAVVSKGGDESIGKGDGL) are disordered. The residue at position 411 (Ser-411) is a Phosphoserine. The segment covering 413–432 (VRDDAVVSKGGDESIGKGDG) has biased composition (basic and acidic residues). Phosphoserine; by PLK1 is present on Ser-426. Phosphoserine occurs at positions 468 and 515. Residues 508–522 (ETGNLNASPSSNQTR) show a composition bias toward polar residues. The segment at 508-531 (ETGNLNASPSSNQTRSPEKFEKPE) is disordered. Residue Thr-549 is modified to Phosphothreonine; by CDK1. Ser-636 carries the post-translational modification Phosphoserine; by PLK1.

Interacts with FAM29A. Interacts with HSPA1A and HSPA1B. Interacts with gamma-tubulin in a HSPA1A/B-dependent manner. Post-translationally, during mitosis, prior phosphorylation on Thr-549 by CDK1 promotes subsequent phosphorylation by PLK1 on Thr-382, Ser-426 and Ser-636. Phosphorylated NEDD1 can interact with gamma-tubulin for targeting the gamma-tubulin ring complex (gTuRC) to the centrosome, an important step for spindle formation.

It is found in the cytoplasm. The protein resides in the cytoskeleton. The protein localises to the microtubule organizing center. Its subcellular location is the centrosome. Required for mitosis progression. Promotes the nucleation of microtubules from the spindle. This Bos taurus (Bovine) protein is Protein NEDD1 (NEDD1).